A 2083-amino-acid chain; its full sequence is Non-reducing polyketide synthase curS2 (2083 aa).

The segment at 9-246 (LLFGDVTDPW…NELDIHALQH (238 aa)) is N-terminal acylcarrier protein transacylase domain (SAT). Positions 366-798 (RDGIAIVGMA…GGNACLLLED (433 aa)) constitute a Ketosynthase family 3 (KS3) domain. Active-site for beta-ketoacyl synthase activity residues include C543, H678, and H717. The tract at residues 895–1201 (VFVFTGQGSH…THTLQPNTHN (307 aa)) is malonyl-CoA:ACP transacylase (MAT) domain. The active-site For acyl/malonyl transferase activity is the S986. Residues 1276–1415 (AQYLVSKSSS…DPAKTQADWD (140 aa)) are N-terminal hotdog fold. The PKS/mFAS DH domain maps to 1276-1585 (AQYLVSKSSS…YQELPRVTWK (310 aa)). The product template (PT) domain stretch occupies residues 1285–1581 (SPKVQVVFRA…IDLRYQELPR (297 aa)). The segment at 1437 to 1585 (GHRMQPEVFY…YQELPRVTWK (149 aa)) is C-terminal hotdog fold. A Carrier domain is found at 1637-1714 (DFDEGLVDAI…DLRRAFGANK (78 aa)). S1674 is subject to O-(pantetheine 4'-phosphoryl)serine. Residues 1710 to 1790 (FGANKPKTSK…KMDETDTSPA (81 aa)) form a disordered region. Positions 1718-1736 (SKPQPGSTTPSSSQSSIPS) are enriched in low complexity. Residues 1745–1754 (MSDTASSLGS) are compositionally biased toward polar residues. Basic and acidic residues predominate over residues 1771–1784 (LEPKPNHHLGKMDE). Positions 1811-2058 (MMADGTGTIA…LSVAGDHLDL (248 aa)) are thioesterase (TE) domain. H2065 acts as the For thioesterase activity in catalysis.

The protein operates within mycotoxin biosynthesis. Non-reducing polyketide synthase; part of the gene cluster that mediates the biosynthesis of 10,11-dehydrocurvularin, a prevalent fungal phytotoxin with heat shock response and immune-modulatory activities. The highly reducing polyketide synthase curS1 is responsible for biosynthesis up to the tetraketide stage. The non-reducing polyketide synthase curS2 then conducts four additional chain extension cycles, producing the unreduced part of the nascent octaketide from C-1 to C-8 in 10,11-dehydrocurvularin. This chain is Non-reducing polyketide synthase curS2, found in Aspergillus terreus.